The sequence spans 157 residues: Transcriptional repressor NrdR (157 aa).

Residues 3–34 (CPFCSATDTKVIDSRLVADGHQVRRRRECLLC) fold into a zinc finger. The ATP-cone domain maps to 49 to 139 (PRVVKQDGSR…VYRAFEDVSE (91 aa)).

This sequence belongs to the NrdR family. Zn(2+) is required as a cofactor.

Functionally, negatively regulates transcription of bacterial ribonucleotide reductase nrd genes and operons by binding to NrdR-boxes. This chain is Transcriptional repressor NrdR, found in Shewanella loihica (strain ATCC BAA-1088 / PV-4).